The following is a 286-amino-acid chain: Nucleotide-binding protein HS_1178 (286 aa).

8–15 lines the ATP pocket; sequence GRSGAGKS. 56–59 is a GTP binding site; sequence DIRN.

It belongs to the RapZ-like family.

Displays ATPase and GTPase activities. This is Nucleotide-binding protein HS_1178 from Histophilus somni (strain 129Pt) (Haemophilus somnus).